The following is a 287-amino-acid chain: ATP synthase gamma chain (287 aa).

This sequence belongs to the ATPase gamma chain family. In terms of assembly, F-type ATPases have 2 components, CF(1) - the catalytic core - and CF(0) - the membrane proton channel. CF(1) has five subunits: alpha(3), beta(3), gamma(1), delta(1), epsilon(1). CF(0) has three main subunits: a, b and c.

Its subcellular location is the cell inner membrane. Its function is as follows. Produces ATP from ADP in the presence of a proton gradient across the membrane. The gamma chain is believed to be important in regulating ATPase activity and the flow of protons through the CF(0) complex. This Shigella boydii serotype 4 (strain Sb227) protein is ATP synthase gamma chain.